The sequence spans 247 residues: Chymase (247 aa).

Residues 1 to 19 (MNLHALCLLLLLLGSSTKA) form the signal peptide. Residues 20 to 21 (GE) constitute a propeptide, activation peptide. Positions 22-245 (IIGGTECIPH…YRPWINKILR (224 aa)) constitute a Peptidase S1 domain. Cys51 and Cys67 form a disulfide bridge. Residue His66 is the Charge relay system of the active site. Asn80 carries N-linked (GlcNAc...) asparagine glycosylation. The Charge relay system role is filled by Asp110. 2 disulfides stabilise this stretch: Cys144-Cys209 and Cys175-Cys188. Ser203 (charge relay system) is an active-site residue.

Belongs to the peptidase S1 family. Granzyme subfamily. As to expression, mast cells.

The protein localises to the secreted. It localises to the cytoplasmic granule. It catalyses the reaction Preferential cleavage: Phe-|-Xaa &gt; Tyr-|-Xaa &gt; Trp-|-Xaa &gt; Leu-|-Xaa.. In terms of biological role, major secreted protease of mast cells with suspected roles in vasoactive peptide generation, extracellular matrix degradation, and regulation of gland secretion. This Rattus norvegicus (Rat) protein is Chymase (Cma1).